A 322-amino-acid chain; its full sequence is uncharacterized protein (322 aa).

A Radical SAM core domain is found at 34 to 286 (KFKQKIFKIP…QRLSKDKVPE (253 aa)). The [4Fe-4S] cluster site is built by C50, C58, and C61.

It belongs to the radical SAM superfamily. The cofactor is [4Fe-4S] cluster.

This is an uncharacterized protein from Methanocaldococcus jannaschii (strain ATCC 43067 / DSM 2661 / JAL-1 / JCM 10045 / NBRC 100440) (Methanococcus jannaschii).